The primary structure comprises 572 residues: Probable cysteine--tRNA ligase, mitochondrial (572 aa).

Cys81 serves as a coordination point for Zn(2+). Residue Gly82 coordinates L-cysteine. The 'HIGH' region motif lies at 83–93 (PTVYDHAHLGH). Thr122 provides a ligand contact to L-cysteine. A 'KIIK' region motif is present at residues 127–130 (KIIK). Zn(2+) contacts are provided by Cys260, His285, and Glu289. Residue His285 coordinates L-cysteine. Residues 320-324 (KMSKS) carry the 'KMSKS' region motif. Lys323 provides a ligand contact to ATP.

This sequence belongs to the class-I aminoacyl-tRNA synthetase family. Zn(2+) is required as a cofactor.

Its subcellular location is the mitochondrion. The catalysed reaction is tRNA(Cys) + L-cysteine + ATP = L-cysteinyl-tRNA(Cys) + AMP + diphosphate. It catalyses the reaction 2 L-cysteine = S-sulfanyl-L-cysteine + L-alanine. It carries out the reaction S-sulfanyl-L-cysteine + L-cysteine = S-disulfanyl-L-cysteine + L-alanine. The enzyme catalyses S-sulfanyl-L-cysteine + tRNA(Cys) + ATP = (S)-sulfanyl-L-cysteinyl-tRNA(Cys) + AMP + diphosphate. The catalysed reaction is S-disulfanyl-L-cysteine + tRNA(Cys) + ATP = (S)-disulfanyl-L-cysteinyl-tRNA(Cys) + AMP + diphosphate. Functionally, mitochondrial cysteine-specific aminoacyl-tRNA synthetase that catalyzes the ATP-dependent ligation of cysteine to tRNA(Cys). In terms of biological role, in addition to its role as an aminoacyl-tRNA synthetase, has also cysteine persulfide synthase activity. Produces reactive persulfide species such as cysteine persulfide (CysSSH) from substrate cysteine and mediate direct incorporation of CysSSH into proteins during translations, resulting in protein persulfides and polysulfides. CysSSHs behave as potent antioxidants and cellular protectants. This chain is Probable cysteine--tRNA ligase, mitochondrial (cars2), found in Xenopus tropicalis (Western clawed frog).